We begin with the raw amino-acid sequence, 416 residues long: Serine hydroxymethyltransferase (416 aa).

(6S)-5,6,7,8-tetrahydrofolate contacts are provided by residues Leu-121 and 125–127; that span reads GHL. At Lys-229 the chain carries N6-(pyridoxal phosphate)lysine.

It belongs to the SHMT family. In terms of assembly, homodimer. The cofactor is pyridoxal 5'-phosphate.

It localises to the cytoplasm. It carries out the reaction (6R)-5,10-methylene-5,6,7,8-tetrahydrofolate + glycine + H2O = (6S)-5,6,7,8-tetrahydrofolate + L-serine. It participates in one-carbon metabolism; tetrahydrofolate interconversion. The protein operates within amino-acid biosynthesis; glycine biosynthesis; glycine from L-serine: step 1/1. Its function is as follows. Catalyzes the reversible interconversion of serine and glycine with tetrahydrofolate (THF) serving as the one-carbon carrier. This reaction serves as the major source of one-carbon groups required for the biosynthesis of purines, thymidylate, methionine, and other important biomolecules. Also exhibits THF-independent aldolase activity toward beta-hydroxyamino acids, producing glycine and aldehydes, via a retro-aldol mechanism. The chain is Serine hydroxymethyltransferase from Bordetella avium (strain 197N).